Reading from the N-terminus, the 90-residue chain is RNA-binding protein Hfq (90 aa).

A Sm domain is found at Asp10–Leu70.

Belongs to the Hfq family. In terms of assembly, homohexamer.

In terms of biological role, RNA chaperone that binds small regulatory RNA (sRNAs) and mRNAs to facilitate mRNA translational regulation in response to envelope stress, environmental stress and changes in metabolite concentrations. Also binds with high specificity to tRNAs. The polypeptide is RNA-binding protein Hfq (Symbiobacterium thermophilum (strain DSM 24528 / JCM 14929 / IAM 14863 / T)).